The following is a 1014-amino-acid chain: Collagen alpha-1(I) chain (1014 aa).

Positions 1-1014 are disordered; that stretch reads SYGYDEKGGI…PGPPGPPGPP (1014 aa). Residues 9 to 22 are compositionally biased toward low complexity; it reads GISVPGPMGPSGPR. P25, P28, P30, P39, P42, P45, P60, P75, P81, P90, and P96 each carry 4-hydroxyproline. Residues 33 to 51 show a composition bias toward low complexity; the sequence is QGFQGPPGEPGEPGSSGPM. Basic and acidic residues predominate over residues 63-77; that stretch reads NGDDGEAGKPGRPGE. K99 bears the 5-hydroxylysine; alternate mark. The O-linked (Gal...) hydroxylysine; alternate glycan is linked to K99. The residue at position 105 (S105) is a Phosphoserine. Low complexity predominate over residues 113 to 129; sequence DAGPAGPKGEPGSPGEN. P123, P126, P132, P141, P147, P168, P177, P180, P207, P210, P222, P228, P237, P243, P246, and P261 each carry 4-hydroxyproline. Low complexity predominate over residues 147-165; the sequence is PGASGPAGARGNDGATGAA. Positions 167-179 are enriched in pro residues; that stretch reads PPGPTGPAGPPGF. A compositionally biased stretch (low complexity) spans 213 to 252; the sequence is AGAAGPAGNPGADGQPGAKGANGAPGIAGAPGFPGARGPS. Position 264 is a 5-hydroxylysine (K264). P270, P273, P285, P294, P309, P315, P324, and P330 each carry 4-hydroxyproline. The span at 319 to 328 shows a compositional bias: gly residues; sequence GERGGPGSRG. A 5-hydroxylysine modification is found at K339. 26 positions are modified to 4-hydroxyproline: P348, P357, P363, P369, P378, P381, P390, P399, P405, P417, P426, P435, P438, P456, P473, P479, P485, P491, P497, P503, P515, P524, P535, P548, P554, and P563. Residues 372–398 show a composition bias toward low complexity; the sequence is KGLTGSPGSPGPDGKTGPPGPAGQDGR. The span at 407–426 shows a compositional bias: low complexity; the sequence is ARGQAGVMGFPGPKGAAGEP. Over residues 485–494 the composition is skewed to low complexity; the sequence is PGEAGKPGEQ. Residue K575 is modified to 5-hydroxylysine. 4-hydroxyproline occurs at positions 581, 596, and 602. The span at 608 to 622 shows a compositional bias: low complexity; it reads SGPSGPAGPTGARGA. S611 carries the post-translational modification Phosphoserine. Residues P623, P629, P632, P641, P647, P674, and P683 each carry the 4-hydroxyproline modification. Positions 635–665 are enriched in low complexity; sequence AGFAGPPGADGQPGAKGEPGDAGAKGDAGPS. Position 686 is a 5-hydroxylysine (K686). The segment covering 691-707 has biased composition (low complexity); the sequence is SAGPPGATGFPGAAGRV. 2 positions are modified to 4-hydroxyproline: P695 and P701. A 3-hydroxyproline modification is found at P709. P710, P719, P722, P743, P752, P760, P769, P787, P796, P799, P805, P820, P826, P832, P841, and P847 each carry 4-hydroxyproline. A compositionally biased stretch (low complexity) spans 736 to 745; it reads ETGPAGRPGE. Positions 757–769 are enriched in low complexity; sequence KGSPGADGPAGAP. The segment covering 819–829 has biased composition (pro residues); the sequence is PPGPVGPPGLA. Residue K856 is modified to 5-hydroxylysine. The span at 864-879 shows a compositional bias: pro residues; that stretch reads PGPPGAPGAPGAPGPV. 4-hydroxyproline is present on residues P867, P870, and P873. The segment covering 900-914 has biased composition (low complexity); the sequence is AGPAGARGPAGPQGP. Positions 915–929 are enriched in basic and acidic residues; the sequence is RGDKGETGEQGDRGI. At K918 the chain carries 5-hydroxylysine. K930 is modified (5-hydroxylysine; alternate). O-linked (Gal...) hydroxylysine; alternate glycosylation is present at K930. 4-hydroxyproline is present on residues P945, P948, P966, and P981. Over residues 948 to 981 the composition is skewed to low complexity; it reads PGEQGPSGASGPAGPRGPPGSAGSPGKDGLNGLP. 3-hydroxyproline is present on P986. A 4-hydroxyproline modification is found at P987. The span at 999–1014 shows a compositional bias: pro residues; it reads VGPPGPPGPPGPPGPP. The residue at position 1001 (P1001) is a 3-hydroxyproline. At P1002 the chain carries 4-hydroxyproline. Position 1004 is a 3-hydroxyproline (P1004). At P1005 the chain carries 4-hydroxyproline. P1007 carries the post-translational modification 3-hydroxyproline. Residues P1008, P1011, and P1014 each carry the 4-hydroxyproline modification.

Belongs to the fibrillar collagen family. As to quaternary structure, trimers of one alpha 2(I) and two alpha 1(I) chains. In terms of processing, contains mostly 4-hydroxyproline. Proline residues at the third position of the tripeptide repeating unit (G-X-Y) are hydroxylated in some or all of the chains. Contains 3-hydroxyproline at a few sites. This modification occurs on the first proline residue in the sequence motif Gly-Pro-Hyp, where Hyp is 4-hydroxyproline. Post-translationally, lysine residues at the third position of the tripeptide repeating unit (G-X-Y) are 5-hydroxylated in some or all of the chains. In terms of processing, O-glycosylated on hydroxylated lysine residues. The O-linked glycan consists of a Glc-Gal disaccharide. Expressed in bones.

Its subcellular location is the secreted. It is found in the extracellular space. The protein localises to the extracellular matrix. Its function is as follows. Type I collagen is a member of group I collagen (fibrillar forming collagen). The chain is Collagen alpha-1(I) chain from Megatherium americanum (Giant ground sloth).